We begin with the raw amino-acid sequence, 71 residues long: UPF0352 protein Asuc_0778 (71 aa).

Belongs to the UPF0352 family.

This Actinobacillus succinogenes (strain ATCC 55618 / DSM 22257 / CCUG 43843 / 130Z) protein is UPF0352 protein Asuc_0778.